We begin with the raw amino-acid sequence, 89 residues long: Small ribosomal subunit protein uS17 (89 aa).

This sequence belongs to the universal ribosomal protein uS17 family. In terms of assembly, part of the 30S ribosomal subunit.

Its function is as follows. One of the primary rRNA binding proteins, it binds specifically to the 5'-end of 16S ribosomal RNA. This Acidovorax ebreus (strain TPSY) (Diaphorobacter sp. (strain TPSY)) protein is Small ribosomal subunit protein uS17.